Consider the following 311-residue polypeptide: Porphobilinogen deaminase (311 aa).

Cys-241 carries the post-translational modification S-(dipyrrolylmethanemethyl)cysteine.

It belongs to the HMBS family. As to quaternary structure, monomer. Dipyrromethane is required as a cofactor.

It catalyses the reaction 4 porphobilinogen + H2O = hydroxymethylbilane + 4 NH4(+). Its pathway is porphyrin-containing compound metabolism; protoporphyrin-IX biosynthesis; coproporphyrinogen-III from 5-aminolevulinate: step 2/4. Functionally, tetrapolymerization of the monopyrrole PBG into the hydroxymethylbilane pre-uroporphyrinogen in several discrete steps. This chain is Porphobilinogen deaminase, found in Carboxydothermus hydrogenoformans (strain ATCC BAA-161 / DSM 6008 / Z-2901).